Consider the following 434-residue polypeptide: Tryptophan--tRNA ligase (434 aa).

Residues 14–16 (TTS) and 22–23 (GN) contribute to the ATP site. The 'HIGH' region signature appears at 15 to 23 (TSGTPHLGN). Asp147 provides a ligand contact to L-tryptophan. Residues 159–161 (GRD), Leu199, and 206–210 (KMSKS) contribute to the ATP site. The short motif at 206 to 210 (KMSKS) is the 'KMSKS' region element.

It belongs to the class-I aminoacyl-tRNA synthetase family. Homodimer.

It localises to the cytoplasm. It carries out the reaction tRNA(Trp) + L-tryptophan + ATP = L-tryptophyl-tRNA(Trp) + AMP + diphosphate + H(+). Its function is as follows. Catalyzes the attachment of tryptophan to tRNA(Trp). This Xylella fastidiosa (strain 9a5c) protein is Tryptophan--tRNA ligase.